Here is a 66-residue protein sequence, read N- to C-terminus: Large ribosomal subunit protein bL35 (66 aa).

The protein belongs to the bacterial ribosomal protein bL35 family.

The polypeptide is Large ribosomal subunit protein bL35 (Borreliella burgdorferi (strain ATCC 35210 / DSM 4680 / CIP 102532 / B31) (Borrelia burgdorferi)).